The primary structure comprises 429 residues: MSAPQAAIDTDHADRHGPRRAWAAVGVLALVGTLNYVDRFLPSVLAEPIKHDLELSDTAIGVINGFGFLIVYAVMGIAVARVADRGAFGAVVAGCLTLWGTMTMLGGAVQSGFQLALTRVGVAIGEAGSTPAAHAYVARNFVPQRRSAPLAVITIAIPLASTASLLGGGLLAQSLGWRTAFVIMGAVSVVLAPLVLLVVGVRQSLPAAPAVVDKTAGGWWNLLRKPSFLIVVAGTAFISAAGYSLTTFSPAFLMRTRGMSLGEVGVEYGLATGAIGVLGLLIVGRLADRLAERDPRWLLWIVVTLTLVLLPASVLAFVVEDRMLCVLFLALSYAIGTSYLAPSIAAIQRLVLPEQRATASAMFLFFNAVFGSVGPFVVGMLSDSLTDDLGAQALGRALLLLVAAMQLVGAICYWLASARYRRDIIEEAR.

12 helical membrane-spanning segments follow: residues 21 to 41, 59 to 79, 86 to 106, 115 to 137, 150 to 170, 181 to 201, 228 to 248, 264 to 284, 299 to 319, 327 to 347, 361 to 381, and 397 to 417; these read AWAAVGVLALVGTLNYVDRFL, AIGVINGFGFLIVYAVMGIAV, GAFGAVVAGCLTLWGTMTMLG, LALTRVGVAIGEAGSTPAAHAYV, LAVITIAIPLASTASLLGGGL, FVIMGAVSVVLAPLVLLVVGV, FLIVVAGTAFISAAGYSLTTF, VGVEYGLATGAIGVLGLLIVG, LWIVVTLTLVLLPASVLAFVV, LFLALSYAIGTSYLAPSIAAI, AMFLFFNAVFGSVGPFVVGML, and ALLLLVAAMQLVGAICYWLAS.

It belongs to the major facilitator superfamily.

The protein resides in the cell inner membrane. Probably plays a role in bacterial growth and resistance to antibiotics. This chain is MFS-type efflux pump MSMEG_3705, found in Mycolicibacterium smegmatis (strain ATCC 700084 / mc(2)155) (Mycobacterium smegmatis).